The chain runs to 225 residues: UPF0758 protein XAC3915 (225 aa).

The MPN domain maps to 102-224 (ALSDPPSVGR…PVSFAERGWL (123 aa)). Residues His-173, His-175, and Asp-186 each contribute to the Zn(2+) site. The short motif at 173-186 (HNHPSGNPEPSEAD) is the JAMM motif element.

The protein belongs to the UPF0758 family.

The protein is UPF0758 protein XAC3915 of Xanthomonas axonopodis pv. citri (strain 306).